Reading from the N-terminus, the 238-residue chain is Aliphatic sulfonates import ATP-binding protein SsuB (238 aa).

The 215-residue stretch at 7–221 folds into the ABC transporter domain; sequence VSLHQVHQQF…RPGDAAFASL (215 aa). 39-46 provides a ligand contact to ATP; that stretch reads GRSGSGKT.

Belongs to the ABC transporter superfamily. Aliphatic sulfonates importer (TC 3.A.1.17.2) family. The complex is composed of two ATP-binding proteins (SsuB), two transmembrane proteins (SsuC) and a solute-binding protein (SsuA).

It is found in the cell inner membrane. It catalyses the reaction ATP + H2O + aliphatic sulfonate-[sulfonate-binding protein]Side 1 = ADP + phosphate + aliphatic sulfonateSide 2 + [sulfonate-binding protein]Side 1.. Its function is as follows. Part of the ABC transporter complex SsuABC involved in aliphatic sulfonates import. Responsible for energy coupling to the transport system. The protein is Aliphatic sulfonates import ATP-binding protein SsuB of Granulibacter bethesdensis (strain ATCC BAA-1260 / CGDNIH1).